Here is a 419-residue protein sequence, read N- to C-terminus: S-adenosylmethionine synthase (419 aa).

His15 provides a ligand contact to ATP. Asp17 is a Mg(2+) binding site. A K(+)-binding site is contributed by Glu43. L-methionine contacts are provided by Glu56 and Gln100. Residues 100-110 (QSPDIAQGVNE) form a flexible loop region. Residues 171–173 (DGK), 248–249 (KF), Asp257, 263–264 (RK), Ala280, and Lys284 each bind ATP. Asp257 serves as a coordination point for L-methionine. L-methionine is bound at residue Lys288.

This sequence belongs to the AdoMet synthase family. In terms of assembly, homotetramer; dimer of dimers. It depends on Mg(2+) as a cofactor. Requires K(+) as cofactor.

The protein localises to the cytoplasm. It catalyses the reaction L-methionine + ATP + H2O = S-adenosyl-L-methionine + phosphate + diphosphate. It participates in amino-acid biosynthesis; S-adenosyl-L-methionine biosynthesis; S-adenosyl-L-methionine from L-methionine: step 1/1. Catalyzes the formation of S-adenosylmethionine (AdoMet) from methionine and ATP. The overall synthetic reaction is composed of two sequential steps, AdoMet formation and the subsequent tripolyphosphate hydrolysis which occurs prior to release of AdoMet from the enzyme. This Prochlorococcus marinus (strain MIT 9313) protein is S-adenosylmethionine synthase.